A 341-amino-acid polypeptide reads, in one-letter code: Alpha-ketoglutarate-dependent dioxygenase oryG (341 aa).

Residue His-100 participates in substrate binding. Fe cation is bound by residues His-140 and Asp-142. Thr-167 is a 2-oxoglutarate binding site. Residue His-299 coordinates Fe cation. Arg-311 and Arg-315 together coordinate 2-oxoglutarate. Arg-315 is a binding site for substrate.

This sequence belongs to the TfdA dioxygenase family. Requires Fe(2+) as cofactor.

Its pathway is secondary metabolite biosynthesis. Its function is as follows. Alpha-ketoglutarate-dependent dioxygenase; part of the gene cluster that mediates the biosynthesis of oryzines, natural products with an unusual maleidride backbone. The two subunits of the fungal fatty acid synthase oryfasA and oryfasB probably form octenoic acid. This fatty acid is most likely activated by the acyl-CoA ligase oryP to give octenyl-CoA before the citrate synthase-like protein oryE catalyzes condensation with oxaloacetate to form tricarboxylic acid. The next steps of the pathways are conjectural, but a favorite possible route has been proposed, beginning with decarboxylation and concomitant dehydration by the decarboxylase oryM, followed by tautomerization, which may lead to the production of a diene intermediate. Reduction of this diene intermediate could give the known metabolite piliformic acid. On the pathway to oryzine B and oryzine A, however, hydroxylation of the diene by the alpha-ketoglutarate-dependent dioxygenase oryG and lactonisation by the lactonohydrolases oryH or oryL could give oryzine B directly. Finally, enoyl reduction by the dehydrogenase oryD would then convert oryzine B into oryzine A. The sequence is that of Alpha-ketoglutarate-dependent dioxygenase oryG from Aspergillus oryzae (strain ATCC 42149 / RIB 40) (Yellow koji mold).